Consider the following 881-residue polypeptide: Ent-kaurene synthase CPS/KS, chloroplastic (881 aa).

A chloroplast-targeting transit peptide spans 1–41 (MASSTLIQNRSCGVTSSMSSFQIFRGQPLRFPGTRTPAAVQ). Mg(2+) contacts are provided by Asp-417, Asp-419, Asp-635, Asp-639, Asn-778, Asp-779, and Glu-786. A DXDDTA motif motif is present at residues 417 to 422 (DVDDTA). The short motif at 635-639 (DDYFD) is the DDXXD motif element.

This sequence belongs to the terpene synthase family. Requires Mg(2+) as cofactor.

The protein resides in the plastid. It localises to the chloroplast. It catalyses the reaction (2E,6E,10E)-geranylgeranyl diphosphate = ent-copalyl diphosphate. The catalysed reaction is ent-copalyl diphosphate = ent-kaur-16-ene + diphosphate. The enzyme catalyses ent-copalyl diphosphate = ent-beyerene + diphosphate. It carries out the reaction ent-copalyl diphosphate = ent-sandaracopimara-8(14),15-diene + diphosphate. It catalyses the reaction ent-copalyl diphosphate = ent-isokaurene + diphosphate. The catalysed reaction is ent-copalyl diphosphate + H2O = 16alpha-hydroxy-ent-kaurene + diphosphate. The protein operates within secondary metabolite biosynthesis; terpenoid biosynthesis. Its function is as follows. Bifunctional copalyl diphosphate/kaurene synthase involved in the biosynthesis of labdane-related diterpenoids (LRDs) natural products such as ent-beyerene, an antimicrobial compound. Supports the conversion of geranylgeranyl diphosphate (GGPP) to ent-copalyl diphosphate (ent-CDP). Also catalyzes the subsequent cyclization of ent-CDP into many diterpenes, including ent-kaur-16-ene as the major product, and ent-beyerene, ent-sandaracopimaradiene, ent-kaur-15-ene (ent-isokaurene) and 16-hydroxy-ent-kaurene (ent-16-alpha-hydroxy-kaurene) as minor products. This is Ent-kaurene synthase CPS/KS, chloroplastic from Physcomitrium patens (Spreading-leaved earth moss).